The sequence spans 338 residues: Cap-specific mRNA (nucleoside-2'-O-)-methyltransferase (338 aa).

Tyrosine 22 lines the mRNA pocket. Residues glutamine 39, tyrosine 66, glycine 68, glycine 72, aspartate 95, arginine 97, valine 116, and aspartate 138 each contribute to the S-adenosyl-L-methionine site. A binding to NPH-I region spans residues 169–249 (PAASSLKWRC…NKIIRNRIII (81 aa)). The tract at residues 169 to 333 (PAASSLKWRC…NTKKSVRGNK (165 aa)) is binding to Rap94. Residue lysine 175 is the For methyltransferase activity of the active site. Residues 177-180 (RCPF), aspartate 182, 205-207 (SAE), and glutamate 233 each bind mRNA. Residues 305–338 (HHEPTQRKVPSKNTMLKSRNTKKSVRGNKQGRRT) form a disordered region. Over residues 323 to 338 (RNTKKSVRGNKQGRRT) the composition is skewed to basic residues.

Belongs to the class I-like SAM-binding methyltransferase superfamily. Poxvirus/kinetoplastid 2'-O-MTase family. Interacts with poly(A) polymerase catalytic subunit OPG063. Interacts with OPG109 and OPG123; these interactions might help linking transcription to capping and polyadenylation.

It localises to the virion. The enzyme catalyses a 5'-end (N(7)-methyl 5'-triphosphoguanosine)-ribonucleoside in mRNA + S-adenosyl-L-methionine = a 5'-end (N(7)-methyl 5'-triphosphoguanosine)-(2'-O-methyl-ribonucleoside) in mRNA + S-adenosyl-L-homocysteine + H(+). In terms of biological role, displays methyltransferase, positive regulation of the poly(A) polymerase and transcription elongation activities. Involved in the modification of both mRNA ends and in intermediate and late gene positive transcription elongation. At the mRNAs 5' end, methylates the ribose 2' OH group of the first transcribed nucleotide, thereby producing a 2'-O-methylpurine cap. At the 3' end, functions as a processivity factor which stimulates the activity of the viral poly(A) polymerase OPG063 that creates mRNA's poly(A) tail. In the presence of OPG102, OPG063 does not dissociate from the RNA allowing tail elongation to around 250 adenylates. The chain is Cap-specific mRNA (nucleoside-2'-O-)-methyltransferase (OPG102) from Oryctolagus cuniculus (Rabbit).